Reading from the N-terminus, the 493-residue chain is Galactose-1-phosphate uridylyltransferase (493 aa).

It belongs to the galactose-1-phosphate uridylyltransferase type 2 family.

It is found in the cytoplasm. It catalyses the reaction alpha-D-galactose 1-phosphate + UDP-alpha-D-glucose = alpha-D-glucose 1-phosphate + UDP-alpha-D-galactose. It functions in the pathway carbohydrate metabolism; galactose metabolism. This is Galactose-1-phosphate uridylyltransferase from Lactococcus lactis subsp. cremoris (strain MG1363).